The sequence spans 909 residues: Protein translocase subunit SecA (909 aa).

Residues glutamine 87, 105 to 109, and aspartate 513 each bind ATP; that span reads GEGKT. Positions 834 to 909 are disordered; that stretch reads QEEVERMEEQ…KYKQCHGKID (76 aa). A compositionally biased stretch (basic and acidic residues) spans 836 to 853; it reads EVERMEEQRRAQAEEAAR. Residues 854-863 are compositionally biased toward low complexity; it reads RAQAQHAAAQ. Positions 874-889 are enriched in basic and acidic residues; that stretch reads EGAHQPMVREERKVGR. 4 residues coordinate Zn(2+): cysteine 893, cysteine 895, cysteine 904, and histidine 905. The span at 899-909 shows a compositional bias: basic residues; it reads KKYKQCHGKID.

It belongs to the SecA family. Monomer and homodimer. Part of the essential Sec protein translocation apparatus which comprises SecA, SecYEG and auxiliary proteins SecDF-YajC and YidC. It depends on Zn(2+) as a cofactor.

It is found in the cell inner membrane. Its subcellular location is the cytoplasm. It carries out the reaction ATP + H2O + cellular proteinSide 1 = ADP + phosphate + cellular proteinSide 2.. In terms of biological role, part of the Sec protein translocase complex. Interacts with the SecYEG preprotein conducting channel. Has a central role in coupling the hydrolysis of ATP to the transfer of proteins into and across the cell membrane, serving both as a receptor for the preprotein-SecB complex and as an ATP-driven molecular motor driving the stepwise translocation of polypeptide chains across the membrane. The chain is Protein translocase subunit SecA from Vibrio campbellii (strain ATCC BAA-1116).